The chain runs to 437 residues: 3-phosphoshikimate 1-carboxyvinyltransferase (437 aa).

Positions 22, 23, and 27 each coordinate 3-phosphoshikimate. K22 serves as a coordination point for phosphoenolpyruvate. 2 residues coordinate phosphoenolpyruvate: G94 and R122. S167, Q169, D314, and K341 together coordinate 3-phosphoshikimate. Q169 is a phosphoenolpyruvate binding site. D314 (proton acceptor) is an active-site residue. Residues R345 and R389 each coordinate phosphoenolpyruvate.

The protein belongs to the EPSP synthase family. In terms of assembly, monomer.

The protein localises to the cytoplasm. The enzyme catalyses 3-phosphoshikimate + phosphoenolpyruvate = 5-O-(1-carboxyvinyl)-3-phosphoshikimate + phosphate. It participates in metabolic intermediate biosynthesis; chorismate biosynthesis; chorismate from D-erythrose 4-phosphate and phosphoenolpyruvate: step 6/7. Its function is as follows. Catalyzes the transfer of the enolpyruvyl moiety of phosphoenolpyruvate (PEP) to the 5-hydroxyl of shikimate-3-phosphate (S3P) to produce enolpyruvyl shikimate-3-phosphate and inorganic phosphate. This Oenococcus oeni (strain ATCC BAA-331 / PSU-1) protein is 3-phosphoshikimate 1-carboxyvinyltransferase.